A 777-amino-acid polypeptide reads, in one-letter code: DNA ligase (777 aa).

Residues 35-39, 84-85, and Glu-116 each bind NAD(+); these read DAEYD and SL. Lys-118 (N6-AMP-lysine intermediate) is an active-site residue. Residues Arg-139, Glu-176, Lys-293, and Lys-317 each coordinate NAD(+). Residues Cys-411, Cys-414, Cys-429, and Cys-435 each coordinate Zn(2+). A BRCT domain is found at 691–777; sequence MESQPLEGQT…NQHGIDPGAL (87 aa).

It belongs to the NAD-dependent DNA ligase family. LigA subfamily. Mg(2+) is required as a cofactor. The cofactor is Mn(2+).

The catalysed reaction is NAD(+) + (deoxyribonucleotide)n-3'-hydroxyl + 5'-phospho-(deoxyribonucleotide)m = (deoxyribonucleotide)n+m + AMP + beta-nicotinamide D-nucleotide.. DNA ligase that catalyzes the formation of phosphodiester linkages between 5'-phosphoryl and 3'-hydroxyl groups in double-stranded DNA using NAD as a coenzyme and as the energy source for the reaction. It is essential for DNA replication and repair of damaged DNA. The sequence is that of DNA ligase from Alcanivorax borkumensis (strain ATCC 700651 / DSM 11573 / NCIMB 13689 / SK2).